The primary structure comprises 601 residues: Elongation factor 4 (601 aa).

The 183-residue stretch at 7-189 (KHTRNFSIVA…AIVEKVPVPD (183 aa)) folds into the tr-type G domain. GTP-binding positions include 19 to 24 (DHGKST) and 136 to 139 (NKID).

The protein belongs to the TRAFAC class translation factor GTPase superfamily. Classic translation factor GTPase family. LepA subfamily.

The protein localises to the cell membrane. It catalyses the reaction GTP + H2O = GDP + phosphate + H(+). Functionally, required for accurate and efficient protein synthesis under certain stress conditions. May act as a fidelity factor of the translation reaction, by catalyzing a one-codon backward translocation of tRNAs on improperly translocated ribosomes. Back-translocation proceeds from a post-translocation (POST) complex to a pre-translocation (PRE) complex, thus giving elongation factor G a second chance to translocate the tRNAs correctly. Binds to ribosomes in a GTP-dependent manner. This chain is Elongation factor 4, found in Clostridium novyi (strain NT).